Here is a 159-residue protein sequence, read N- to C-terminus: Probable cyclic pyranopterin monophosphate synthase (159 aa).

Residues 74–76 (MCH) and 110–111 (ME) each bind substrate. The active site involves D125.

It belongs to the MoaC family. In terms of assembly, homohexamer; trimer of dimers.

It carries out the reaction (8S)-3',8-cyclo-7,8-dihydroguanosine 5'-triphosphate = cyclic pyranopterin phosphate + diphosphate. Its pathway is cofactor biosynthesis; molybdopterin biosynthesis. Functionally, catalyzes the conversion of (8S)-3',8-cyclo-7,8-dihydroguanosine 5'-triphosphate to cyclic pyranopterin monophosphate (cPMP). This chain is Probable cyclic pyranopterin monophosphate synthase, found in Methanococcoides burtonii (strain DSM 6242 / NBRC 107633 / OCM 468 / ACE-M).